Reading from the N-terminus, the 270-residue chain is Putative methylsterol monooxygenase DDB_G0269788 (270 aa).

3 helical membrane-spanning segments follow: residues 31–51 (FIAH…CDFM), 82–102 (IFVQ…IGLS), and 110–130 (IPYL…YFYW). Residues 118–249 (ACCFLIEDFY…FTYLDKIFGT (132 aa)) form the Fatty acid hydroxylase domain. A Histidine box-1 motif is present at residues 132-136 (HRALH). The short motif at 145–149 (HKVHH) is the Histidine box-2 element. The Histidine box-3 signature appears at 224–230 (FHDFHHE).

Belongs to the sterol desaturase family. Fe cation serves as cofactor.

It localises to the endoplasmic reticulum membrane. It carries out the reaction 4,4-dimethyl-5alpha-cholest-7-en-3beta-ol + 6 Fe(II)-[cytochrome b5] + 3 O2 + 5 H(+) = 4alpha-carboxy-4beta-methyl-5alpha-cholest-7-ene-3beta-ol + 6 Fe(III)-[cytochrome b5] + 4 H2O. It participates in steroid biosynthesis; zymosterol biosynthesis; zymosterol from lanosterol: step 3/6. This is Putative methylsterol monooxygenase DDB_G0269788 from Dictyostelium discoideum (Social amoeba).